Reading from the N-terminus, the 884-residue chain is Protein P (884 aa).

Residues 1 to 184 (MHPFSRLFRN…GKPYSWEHRQ (184 aa)) form a terminal protein domain (TP) region. Positions 185 to 387 (LVQHNGQQHK…YCIHHIVSSL (203 aa)) are spacer. Disordered stretches follow at residues 218–241 (PSEP…QKST) and 299–345 (RNSG…DFSS). 2 stretches are compositionally biased toward polar residues: residues 222 to 241 (VSVS…QKST) and 323 to 332 (YSSNSTSQRY). The segment at 388-729 (DDWGPCTVTG…YEELWPVVRQ (342 aa)) is polymerase/reverse transcriptase domain (RT). Residues 398 to 639 (DVTIKSPRTP…NHLHFMGYVI (242 aa)) enclose the Reverse transcriptase domain. 3 residues coordinate Mg(2+): Asp470, Asp590, and Asp591.

Belongs to the hepadnaviridae P protein family.

It catalyses the reaction DNA(n) + a 2'-deoxyribonucleoside 5'-triphosphate = DNA(n+1) + diphosphate. The enzyme catalyses Endonucleolytic cleavage to 5'-phosphomonoester.. With respect to regulation, activated by host HSP70 and HSP40 in vitro to be able to bind the epsilon loop of the pgRNA. Because deletion of the RNase H region renders the protein partly chaperone-independent, the chaperones may be needed indirectly to relieve occlusion of the RNA-binding site by this domain. Inhibited by several reverse-transcriptase inhibitors: Lamivudine, Adefovir and Entecavir. In terms of biological role, multifunctional enzyme that converts the viral RNA genome into dsDNA in viral cytoplasmic capsids. This enzyme displays a DNA polymerase activity that can copy either DNA or RNA templates, and a ribonuclease H (RNase H) activity that cleaves the RNA strand of RNA-DNA heteroduplexes in a partially processive 3'- to 5'-endonucleasic mode. Neo-synthesized pregenomic RNA (pgRNA) are encapsidated together with the P protein, and reverse-transcribed inside the nucleocapsid. Initiation of reverse-transcription occurs first by binding the epsilon loop on the pgRNA genome, and is initiated by protein priming, thereby the 5'-end of (-)DNA is covalently linked to P protein. Partial (+)DNA is synthesized from the (-)DNA template and generates the relaxed circular DNA (RC-DNA) genome. After budding and infection, the RC-DNA migrates in the nucleus, and is converted into a plasmid-like covalently closed circular DNA (cccDNA). The activity of P protein does not seem to be necessary for cccDNA generation, and is presumably released from (+)DNA by host nuclear DNA repair machinery. This chain is Protein P, found in Marmota monax (Woodchuck).